Reading from the N-terminus, the 153-residue chain is Small ribosomal subunit protein uS13 (153 aa).

It belongs to the universal ribosomal protein uS13 family.

Its subcellular location is the cytoplasm. Its function is as follows. Located at the top of the head of the 40S subunit, it contacts several helices of the 18S rRNA. This Chlamydomonas reinhardtii (Chlamydomonas smithii) protein is Small ribosomal subunit protein uS13 (RPS18).